We begin with the raw amino-acid sequence, 953 residues long: Homeobox protein LUMINIDEPENDENS (953 aa).

Positions 63-123 form a DNA-binding region, homeobox; sequence KIGKRPRDLL…VTQKTRVRKQ (61 aa). The disordered stretch occupies residues 404-430; it reads EQPGQKAAGKSPQTVRIGTSGRSRPMS. Residues 414 to 425 are compositionally biased toward polar residues; sequence SPQTVRIGTSGR. 5 tandem repeats follow at residues 498–502, 507–511, 516–520, 525–529, and 534–538. Residues 498–538 are 5 X 5 AA repeats of Q-P-V-N-G; it reads QPVNGFSTIQPVNGPSAVQPVNGPLAVQPVNGPSALQPVNG. 3 disordered regions span residues 606-668, 733-763, and 861-953; these read NSKE…EPQD, APNS…NPGM, and VGQM…KRWR. Basic and acidic residues predominate over residues 608-623; that stretch reads KEADVQRNRNRRERET. Low complexity predominate over residues 651-661; the sequence is PEIPSQQPPEE. Residues 733-742 are compositionally biased toward polar residues; it reads APNSSSSSNK. Residues 869-884 are compositionally biased toward low complexity; sequence SSSWRSQQSQNSYYSH. Polar residues-rich tracts occupy residues 888–934 and 942–953; these read EIAS…QQQA and THPYWNQNKRWR.

Interacts with SUF4. As to expression, expressed in shoot apex, root apex, leaf primordia and floral buds.

The protein localises to the nucleus. In terms of biological role, seems to play a role in the regulation of flowering time in the autonomous flowering pathway by repressing FLOWERING LOCUS C expression. The polypeptide is Homeobox protein LUMINIDEPENDENS (LD) (Arabidopsis thaliana (Mouse-ear cress)).